A 333-amino-acid chain; its full sequence is 5-formaminoimidazole-4-carboxamide-1-(beta)-D-ribofuranosyl 5'-monophosphate synthetase (333 aa).

His10 and Ser70 together coordinate 5-amino-1-(5-phospho-beta-D-ribosyl)imidazole-4-carboxamide. Positions 91–324 (KEVLKWESDR…IAREIKIAIE (234 aa)) constitute an ATP-grasp domain. ATP is bound by residues 121 to 181 (PDDI…VPIY) and Glu203. Asn231 is a binding site for 5-amino-1-(5-phospho-beta-D-ribosyl)imidazole-4-carboxamide. Residues Glu269 and Glu282 each contribute to the Mg(2+) site.

This sequence belongs to the phosphohexose mutase family. The cofactor is Mg(2+). Mn(2+) serves as cofactor.

The catalysed reaction is 5-amino-1-(5-phospho-beta-D-ribosyl)imidazole-4-carboxamide + formate + ATP = 5-formamido-1-(5-phospho-D-ribosyl)imidazole-4-carboxamide + ADP + phosphate. The protein operates within purine metabolism; IMP biosynthesis via de novo pathway; 5-formamido-1-(5-phospho-D-ribosyl)imidazole-4-carboxamide from 5-amino-1-(5-phospho-D-ribosyl)imidazole-4-carboxamide (formate route): step 1/1. In terms of biological role, catalyzes the ATP- and formate-dependent formylation of 5-aminoimidazole-4-carboxamide-1-beta-d-ribofuranosyl 5'-monophosphate (AICAR) to 5-formaminoimidazole-4-carboxamide-1-beta-d-ribofuranosyl 5'-monophosphate (FAICAR) in the absence of folates. This chain is 5-formaminoimidazole-4-carboxamide-1-(beta)-D-ribofuranosyl 5'-monophosphate synthetase, found in Pyrococcus horikoshii (strain ATCC 700860 / DSM 12428 / JCM 9974 / NBRC 100139 / OT-3).